A 397-amino-acid chain; its full sequence is DNA-directed RNA polymerase subunit Rpo1C (397 aa).

The protein belongs to the RNA polymerase beta' chain family. In terms of assembly, part of the RNA polymerase complex.

It localises to the cytoplasm. It carries out the reaction RNA(n) + a ribonucleoside 5'-triphosphate = RNA(n+1) + diphosphate. In terms of biological role, DNA-dependent RNA polymerase (RNAP) catalyzes the transcription of DNA into RNA using the four ribonucleoside triphosphates as substrates. Forms part of the jaw domain. The sequence is that of DNA-directed RNA polymerase subunit Rpo1C from Methanosarcina acetivorans (strain ATCC 35395 / DSM 2834 / JCM 12185 / C2A).